Here is a 454-residue protein sequence, read N- to C-terminus: NEDD8-activating enzyme E1 catalytic subunit (454 aa).

A2 is subject to N-acetylalanine. 56-80 contributes to the ATP binding site; sequence GLGCELLKDLALSGFRNLEVIDMDR. The active-site Glycyl thioester intermediate is C215.

This sequence belongs to the ubiquitin-activating E1 family. UBA3 subfamily. In terms of assembly, heterodimer of UBA3/ECR1 and AXR1. Interacts with NEDD8 and RCE1. In terms of tissue distribution, expressed in shoot, root and floral meristems, in vascular tissues of cotyledons and mature leaves, and in the stele of the root.

The protein resides in the nucleus. It catalyses the reaction ATP + [NEDD8 protein] + [E1 NEDD8-activating enzyme]-L-cysteine = AMP + diphosphate + [E1 NEDD8-activating enzyme]-S-[NEDD8 protein]-yl-L-cysteine.. Its pathway is protein modification; protein neddylation. In terms of biological role, catalytic subunit of the dimeric ECR1-AXR1 E1 enzyme. E1 activates NEDD8/RUB1 by first adenylating its C-terminal glycine residue with ATP, thereafter linking this residue to the side chain of the catalytic cysteine, yielding a NEDD8-ECR1 thioester and free AMP. E1 finally transfers NEDD8 to the catalytic cysteine of RCE1. The polypeptide is NEDD8-activating enzyme E1 catalytic subunit (ECR1) (Arabidopsis thaliana (Mouse-ear cress)).